The chain runs to 89 residues: MALTAEEKQDIIAKYATHEGDTGSPEVQIALLTKRIADLTEHLKFHKHDHHSRRGLLLMVGDRRRLLDYLKKVDIERYRSLIERLGLRR.

It belongs to the universal ribosomal protein uS15 family. As to quaternary structure, part of the 30S ribosomal subunit. Forms a bridge to the 50S subunit in the 70S ribosome, contacting the 23S rRNA.

Its function is as follows. One of the primary rRNA binding proteins, it binds directly to 16S rRNA where it helps nucleate assembly of the platform of the 30S subunit by binding and bridging several RNA helices of the 16S rRNA. In terms of biological role, forms an intersubunit bridge (bridge B4) with the 23S rRNA of the 50S subunit in the ribosome. This is Small ribosomal subunit protein uS15 from Bifidobacterium animalis subsp. lactis (strain AD011).